Consider the following 230-residue polypeptide: Interleukin-6 (230 aa).

Positions 1–24 (MASKHNADLSSAAMLAALLLCALG) are cleaved as a signal peptide. Cys96 and Cys106 form a disulfide bridge. N-linked (GlcNAc...) asparagine glycosylation occurs at Asn100. The segment covering 206–218 (REMPKQKRRKDDG) has biased composition (basic and acidic residues). The disordered stretch occupies residues 206–230 (REMPKQKRRKDDGIIPPIHPSYQMT).

The protein belongs to the IL-6 superfamily. Component of a hexamer of two molecules each of IL6, IL6R and IL6ST; first binds to IL6R to associate with the signaling subunit IL6ST. Expressed in kidney and spleen. Low expression in liver and gills.

It localises to the secreted. Its function is as follows. Cytokine with a wide variety of biological functions in immunity, tissue regeneration, and metabolism. Binds to IL6R, then the complex associates to the signaling subunit IL6ST/gp130 to trigger the intracellular IL6-signaling pathway. The interaction with the membrane-bound IL6R and IL6ST stimulates 'classic signaling', whereas the binding of IL6 and soluble IL6R to IL6ST stimulates 'trans-signaling'. Alternatively, 'cluster signaling' occurs when membrane-bound IL6:IL6R complexes on transmitter cells activate IL6ST receptors on neighboring receiver cells. The polypeptide is Interleukin-6 (il6) (Paralichthys olivaceus (Bastard halibut)).